Reading from the N-terminus, the 146-residue chain is Large ribosomal subunit protein uL15 (146 aa).

Residues 1–13 (MKLHELKPAEGSR) are compositionally biased toward basic and acidic residues. Residues 1-51 (MKLHELKPAEGSRKVRNRVGRGTSSGNGKTSGRGQKGQKARSGGGVRLGFE) are disordered. 2 stretches are compositionally biased toward gly residues: residues 23 to 35 (TSSG…GRGQ) and 42 to 51 (SGGGVRLGFE).

This sequence belongs to the universal ribosomal protein uL15 family. In terms of assembly, part of the 50S ribosomal subunit.

Its function is as follows. Binds to the 23S rRNA. The protein is Large ribosomal subunit protein uL15 of Streptococcus pneumoniae serotype 2 (strain D39 / NCTC 7466).